The sequence spans 596 residues: NADH-quinone oxidoreductase subunit C/D (596 aa).

Residues 1–186 form an NADH dehydrogenase I subunit C region; sequence MTDLTAQDAA…DPFELTKAKQ (186 aa). Residues 210–596 form an NADH dehydrogenase I subunit D region; that stretch reads DFMFLNLGPN…IDFVMSDVDR (387 aa).

The protein in the N-terminal section; belongs to the complex I 30 kDa subunit family. It in the C-terminal section; belongs to the complex I 49 kDa subunit family. NDH-1 is composed of 13 different subunits. Subunits NuoB, CD, E, F, and G constitute the peripheral sector of the complex.

It localises to the cell inner membrane. The enzyme catalyses a quinone + NADH + 5 H(+)(in) = a quinol + NAD(+) + 4 H(+)(out). Functionally, NDH-1 shuttles electrons from NADH, via FMN and iron-sulfur (Fe-S) centers, to quinones in the respiratory chain. The immediate electron acceptor for the enzyme in this species is believed to be ubiquinone. Couples the redox reaction to proton translocation (for every two electrons transferred, four hydrogen ions are translocated across the cytoplasmic membrane), and thus conserves the redox energy in a proton gradient. The protein is NADH-quinone oxidoreductase subunit C/D of Salmonella choleraesuis (strain SC-B67).